Here is a 107-residue protein sequence, read N- to C-terminus: Large ribosomal subunit protein uL23 (107 aa).

Belongs to the universal ribosomal protein uL23 family. Part of the 50S ribosomal subunit. Contacts protein L29, and trigger factor when it is bound to the ribosome.

Functionally, one of the early assembly proteins it binds 23S rRNA. One of the proteins that surrounds the polypeptide exit tunnel on the outside of the ribosome. Forms the main docking site for trigger factor binding to the ribosome. This Rhodopirellula baltica (strain DSM 10527 / NCIMB 13988 / SH1) protein is Large ribosomal subunit protein uL23.